Here is a 1937-residue protein sequence, read N- to C-terminus: Myosin-8 (1937 aa).

The region spanning 35 to 84 is the Myosin N-terminal SH3-like domain; sequence DAKTSVFVAEPKESYVKSTIQSKEGGKVTVKTEGGATLTVREDQVFPMNP. A phosphothreonine mark is found at T66 and T71. Positions 88–781 constitute a Myosin motor domain; that stretch reads DKIEDMAMMT…LLGLLEEMRD (694 aa). Position 132 is an N6,N6,N6-trimethyllysine (K132). 181–188 contacts ATP; sequence GESGAGKT. A Phosphotyrosine modification is found at Y389. S392 bears the Phosphoserine mark. T419 is modified (phosphothreonine). The residue at position 424 (Y424) is a Phosphotyrosine. Position 625 is a phosphoserine (S625). Positions 658-680 are actin-binding; that stretch reads LNKLMTNLRSTHPHFVRCIIPNE. Position 756 is a pros-methylhistidine (H756). The tract at residues 760 to 774 is actin-binding; sequence KFGHTKVFFKAGLLG. The IQ domain maps to 781–813; sequence DEKLAQIITRTQAVCRGFLMRVEYQKMLQRREA. Residues 842–1937 adopt a coiled-coil conformation; sequence LLKSAETEKE…REVHTKISAE (1096 aa). 2 positions are modified to phosphoserine: S1091 and S1095. Positions 1126-1146 are disordered; that stretch reads EAERASRAKAEKQRSDLSREL. Residues 1127–1146 are compositionally biased toward basic and acidic residues; sequence AERASRAKAEKQRSDLSREL. Phosphoserine is present on residues S1161, S1236, S1242, and S1260. T1264 and T1285 each carry phosphothreonine. Phosphoserine is present on residues S1291, S1302, and S1305. Y1463 is subject to Phosphotyrosine. T1466 bears the Phosphothreonine mark. Position 1473 is a phosphoserine (S1473). Y1491 carries the phosphotyrosine modification. The residue at position 1494 (S1494) is a Phosphoserine. T1500 bears the Phosphothreonine mark. S1513 carries the phosphoserine modification. A Phosphothreonine modification is found at T1516. Residues S1553, S1573, S1602, S1713, and S1725 each carry the phosphoserine modification. T1729 is modified (phosphothreonine). The residue at position 1738 (S1738) is a Phosphoserine.

This sequence belongs to the TRAFAC class myosin-kinesin ATPase superfamily. Myosin family. In terms of assembly, muscle myosin is a hexameric protein that consists of 2 heavy chain subunits (MHC), 2 alkali light chain subunits (MLC) and 2 regulatory light chain subunits (MLC-2).

Its subcellular location is the cytoplasm. It localises to the myofibril. Its function is as follows. Muscle contraction. This Homo sapiens (Human) protein is Myosin-8 (MYH8).